The following is a 157-amino-acid chain: Ribosome maturation factor RimP (157 aa).

This sequence belongs to the RimP family.

It localises to the cytoplasm. Its function is as follows. Required for maturation of 30S ribosomal subunits. In Synechococcus sp. (strain JA-3-3Ab) (Cyanobacteria bacterium Yellowstone A-Prime), this protein is Ribosome maturation factor RimP.